An 808-amino-acid chain; its full sequence is Putative dimethyl sulfoxide reductase chain YnfE (808 aa).

A signal peptide (tat-type signal) is located at residues Met-1 to Ala-43. The 4Fe-4S Mo/W bis-MGD-type domain maps to Glu-49–Asp-110. Positions 56, 60, 64, and 96 each coordinate [4Fe-4S] cluster. Ser-196 contributes to the Mo-bis(molybdopterin guanine dinucleotide) binding site.

This sequence belongs to the prokaryotic molybdopterin-containing oxidoreductase family. [4Fe-4S] cluster is required as a cofactor. It depends on Mo-bis(molybdopterin guanine dinucleotide) as a cofactor. Post-translationally, exported by the Tat system. The position of the signal peptide cleavage has not been experimentally proven.

It is found in the cell membrane. Its function is as follows. Terminal reductase during anaerobic growth on various sulfoxide and N-oxide compounds. The chain is Putative dimethyl sulfoxide reductase chain YnfE (ynfE) from Escherichia coli (strain K12).